A 177-amino-acid chain; its full sequence is Secretion monitor (177 aa).

The first 30 residues, 1–30 (MIGILNRWRQFGRRYFWPHLLLGMVAASLG), serve as a signal peptide directing secretion.

The protein belongs to the SecM family.

It localises to the cytoplasm. The protein resides in the cytosol. It is found in the periplasm. Its function is as follows. Regulates secA expression by translational coupling of the secM secA operon. Translational pausing at a specific Pro residue 5 residues before the end of the protein may allow disruption of a mRNA repressor helix that normally suppresses secA translation initiation. In Yersinia enterocolitica serotype O:8 / biotype 1B (strain NCTC 13174 / 8081), this protein is Secretion monitor.